The primary structure comprises 385 residues: GTPase Obg (385 aa).

The 159-residue stretch at 1 to 159 folds into the Obg domain; it reads MHFIDQAEIE…RRLRLELKLI (159 aa). Residues 160–328 form the OBG-type G domain; that stretch reads AEVGIVGMPN…LLQRVWQCLG (169 aa). Residues 166–173, 191–195, 213–216, 280–283, and 309–311 contribute to the GTP site; these read GMPNAGKS, FTTLQ, DIPG, NKID, and SAV. Residues Ser173 and Thr193 each coordinate Mg(2+).

The protein belongs to the TRAFAC class OBG-HflX-like GTPase superfamily. OBG GTPase family. As to quaternary structure, monomer. Mg(2+) serves as cofactor.

It is found in the cytoplasm. An essential GTPase which binds GTP, GDP and possibly (p)ppGpp with moderate affinity, with high nucleotide exchange rates and a fairly low GTP hydrolysis rate. Plays a role in control of the cell cycle, stress response, ribosome biogenesis and in those bacteria that undergo differentiation, in morphogenesis control. This is GTPase Obg from Synechococcus sp. (strain JA-3-3Ab) (Cyanobacteria bacterium Yellowstone A-Prime).